A 1761-amino-acid polypeptide reads, in one-letter code: MADAAASPVGKRLLLLFADTAASASASAPAAAAASGDPGPALRTRAWRAGTVRAMSGAVPQDLAIFVEFDGCNWKQHSWVKVHAEEVIVLLLEGSLVWAPREDPVLLQGIRVSIAQWPALTFTPLVDKLGLGSVVPVEYLLDRELRFLSDANGLHLFQMGTDSQNQILLEHAALRETVNALISDQKLQEIFSRGPYSVQGHRVKIYQPEGEEGWLYGVVSHQDSITRLMEVSVTESGEIKSVDPRLIHVMLMDNSAPQSEGGTLKAVKSSKGKKKRESIEGKDGRRRKSASDSGCDPASKKLKGDRGEVDSNGSDGGEASRGPWKGGNASGEPGLDQRAKQPPSTFVPQINRNIRFATYTKENGRTLVVQDEPVGGDTPASFTPYSTATGQTPLAPEVGGAENKEAGKTLEQVGQGIVASAAVVTTASSTPNTVRISDTGLAAGTVPEKQKGSRSQASGENSRNSILASSGFGAPLPSSSQPLTFGSGRSQSNGVLATENKPLGFSFGCSSAQEAQKDTDLSKNLFFQCMSQTLPTSNYFTTVSESLADDSSSRDSFKQSLESLSSGLCKGRSVLGTDTKPGSKAGSSVDRKVPAESMPTLTPAFPRSLLNARTPENHENLFLQPPKLSREEPSNPFLAFVEKVEHSPFSSFASQASGSSSSATTVTSKVAPSWPESHSSADSASLAKKKPLFITTDSSKLVSGVLGSALTSGGPSLSAMGNGRSSSPTSSLTQPIEMPTLSSSPTEERPTVGPGQQDNPLLKTFSNVFGRHSGGFLSSPADFSQENKAPFEAVKRFSLDERSLACRQDSDSSTNSDLSDLSDSEEQLQAKTGLKGIPEHLMGKLGPNGERSAELLLGKSKGKQAPKGRPRTAPLKVGQSVLKDVSKVKKLKQSGEPFLQDGSCINVAPHLHKCRECRLERYRKFKEQEQDDSTVACRFFHFRRLIFTRKGVLRVEGFLSPQQSDPDAMNLWIPSSSLAEGIDLETSKYILANVGDQFCQLVMSEKEAMMMVEPHQKVAWKRAVRGVREMCDVCETTLFNIHWVCRKCGFGVCLDCYRLRKSRPRSETEEMGDEEVFSWLKCAKGQSHEPENLMPTQIIPGTALYNIGDMVHAARGKWGIKANCPCISRQNKSVLRPAVTNGMSQLPSINPSASSGNETTFSGGGGPAPVTTPEPDHVPKADSTDIRSEEPLKTDSSASNSNSELKAIRPPCPDTAPPSSALHWLADLATQKAKEETKEAGSLRSVLNKESHSPFGLDSFNSTAKVSPLTPKLFNSLLLGPTASNNKTEGSSLRDLLHSGPGKLPQTPLDTGIPFPPVFSTSSAGVKSKASLPNFLDHIIASVVENKKTSDASKRACNLTDTQKEVKEMVMGLNVLDPHTSHSWLCDGRLLCLHDPSNKNNWKIFRECWKQGQPVLVSGVHKKLKSELWKPEAFSQEFGDQDVDLVNCRNCAIISDVKVRDFWDGFEIICKRLRSEDGQPMVLKLKDWPPGEDFRDMMPTRFEDLMENLPLPEYTKRDGRLNLASRLPSYFVRPDLGPKMYNAYGLITAEDRRVGTTNLHLDVSDAVNVMVYVGIPIGEGAHDEEVLKTIDEGDADEVTKQRIHDGKEKPGALWHIYAAKDAEKIRELLRKVGEEQGQENPPDHDPIHDQSWYLDQTLRKRLYEEYGVQGWAIVQFLGDAVFIPAGAPHQVHNLYSCIKVAEDFVSPEHVKHCFRLTQEFRHLSNTHTNHEDKLQVKNIIYHAVKDAVGTLKAHESKLARS.

At alanine 2 the chain carries N-acetylalanine. The disordered stretch occupies residues 253–346; it reads DNSAPQSEGG…QRAKQPPSTF (94 aa). The segment covering 298-309 has biased composition (basic and acidic residues); that stretch reads ASKKLKGDRGEV. An N6-acetyllysine modification is found at lysine 361. 2 disordered regions span residues 370-394 and 438-496; these read QDEPVGGDTPASFTPYSTATGQTPL and DTGL…NGVL. 3 stretches are compositionally biased toward polar residues: residues 380-392, 453-468, and 477-495; these read ASFTPYSTATGQT, SRSQASGENSRNSILA, and PSSSQPLTFGSGRSQSNGV. Phosphoserine occurs at positions 492, 546, 556, and 560. The tract at residues 572-603 is disordered; sequence RSVLGTDTKPGSKAGSSVDRKVPAESMPTLTP. The residue at position 614 (threonine 614) is a Phosphothreonine. The disordered stretch occupies residues 714 to 762; sequence GPSLSAMGNGRSSSPTSSLTQPIEMPTLSSSPTEERPTVGPGQQDNPLL. A compositionally biased stretch (polar residues) spans 723-745; the sequence is GRSSSPTSSLTQPIEMPTLSSSP. A phosphoserine mark is found at serine 766, serine 773, serine 778, and serine 779. Residue lysine 788 forms a Glycyl lysine isopeptide (Lys-Gly) (interchain with G-Cter in SUMO2) linkage. The residue at position 798 (serine 798) is a Phosphoserine. The tract at residues 805-827 is disordered; the sequence is ACRQDSDSSTNSDLSDLSDSEEQ. The C6-type zinc-finger motif lies at 1031–1056; that stretch reads CDVCETTLFNIHWVCRKCGFGVCLDC. Positions 1142 to 1161 are enriched in polar residues; sequence GMSQLPSINPSASSGNETTF. A disordered region spans residues 1142–1220; sequence GMSQLPSINP…PCPDTAPPSS (79 aa). The span at 1174-1193 shows a compositional bias: basic and acidic residues; the sequence is EPDHVPKADSTDIRSEEPLK. Positions 1194 to 1204 are enriched in polar residues; it reads TDSSASNSNSE. Phosphoserine occurs at positions 1253 and 1259. Positions 1293–1297 match the LXXLL motif motif; the sequence is LRDLL. Positions 1498–1721 constitute a JmjC domain; sequence MPTRFEDLME…HCFRLTQEFR (224 aa). Positions 1560, 1562, and 1689 each coordinate Fe cation.

This sequence belongs to the JHDM2 histone demethylase family. Fe(2+) serves as cofactor. Ubiquitous. Highly expressed in placenta, skeletal muscle, kidney, heart and liver.

It is found in the nucleus. The catalysed reaction is N(6),N(6)-dimethyl-L-lysyl(9)-[histone H3] + 2 2-oxoglutarate + 2 O2 = L-lysyl(9)-[histone H3] + 2 formaldehyde + 2 succinate + 2 CO2. Histone demethylase that specifically demethylates 'Lys-9' of histone H3, thereby playing a central role in histone code. Demethylation of Lys residue generates formaldehyde and succinate. May have tumor suppressor activity. This is Lysine-specific demethylase 3B (KDM3B) from Homo sapiens (Human).